The chain runs to 527 residues: Peptide chain release factor 3 (527 aa).

The tr-type G domain occupies 10–278 (DRRRTFAIIS…TFVENAPAPL (269 aa)). GTP-binding positions include 19-26 (SHPDAGKT), 87-91 (DTPGH), and 141-144 (NKLD).

Belongs to the TRAFAC class translation factor GTPase superfamily. Classic translation factor GTPase family. PrfC subfamily.

It localises to the cytoplasm. Its function is as follows. Increases the formation of ribosomal termination complexes and stimulates activities of RF-1 and RF-2. It binds guanine nucleotides and has strong preference for UGA stop codons. It may interact directly with the ribosome. The stimulation of RF-1 and RF-2 is significantly reduced by GTP and GDP, but not by GMP. In Geobacter metallireducens (strain ATCC 53774 / DSM 7210 / GS-15), this protein is Peptide chain release factor 3.